The chain runs to 501 residues: MSTNKKTIVWFRRDLRIEDNPALAAAAHEGSVFPVFIWCPEEEGQFYPGRASRWWMKQSLAHLRQSLKALGSELTLIKTHSTVSAILDCVRATGATKVVFNHLYDPVSLVRDHTVKEKLVERGISVQSYNGDLCMSPGRYTVKRANLLLVLILTGKKCLDMSVESVVLPPPWRLMPLSAAETVWACSVEELGLENEAEKPSNALLTRAWSPGWSNADKILNEFIEKQLIDYAKNSKKVVGNSTSLLSPYLHFGEISVRRVFQCARMKQIIWARDKNGEGEESADLFLRGIGLRDYSRIICFNFPFTHEQSLLSHLRFFPWDADVDKFKAWRQGRTGYPLVDAGMRELWATGWMHNRIRVIVSSFAVKFLLLPWKWGMKYFWDTLLDADLECDIIGWQYISGSLPDGHELDRLDNPAIQGAKYDPEGEYIRQWLPELARLPTEWIHHPWDAPLTVLKASGVELGTNYAKPIVVIDTARELLTKAISRTREAQIMIGACGDEM.

Positions 5–134 constitute a Photolyase/cryptochrome alpha/beta domain; the sequence is KKTIVWFRRD…SVQSYNGDLC (130 aa). FAD-binding positions include Tyr-231 and 243-247; that span reads TSLLS. Arg-356 contributes to the ATP binding site. Residues Asp-386 and Asp-388 each coordinate FAD. Residue Asp-405 participates in ATP binding.

The protein belongs to the DNA photolyase class-1 family. As to quaternary structure, homodimer. Requires FAD as cofactor. It depends on (6R)-5,10-methylene-5,6,7,8-tetrahydrofolate as a cofactor.

Functionally, mediates blue light-induced gene expression in addition to its role in blue light-dependent inhibition of stem growth. The polypeptide is Cryptochrome-1 (PHR1) (Sinapis alba (White mustard)).